We begin with the raw amino-acid sequence, 340 residues long: UDP-N-acetylglucosamine--N-acetylmuramyl-(pentapeptide) pyrophosphoryl-undecaprenol N-acetylglucosamine transferase (340 aa).

UDP-N-acetyl-alpha-D-glucosamine is bound by residues Thr15–Gly17, Asn127, Ser184, Ile230, and Gln275.

This sequence belongs to the glycosyltransferase 28 family. MurG subfamily.

Its subcellular location is the cell inner membrane. The enzyme catalyses di-trans,octa-cis-undecaprenyl diphospho-N-acetyl-alpha-D-muramoyl-L-alanyl-D-glutamyl-meso-2,6-diaminopimeloyl-D-alanyl-D-alanine + UDP-N-acetyl-alpha-D-glucosamine = di-trans,octa-cis-undecaprenyl diphospho-[N-acetyl-alpha-D-glucosaminyl-(1-&gt;4)]-N-acetyl-alpha-D-muramoyl-L-alanyl-D-glutamyl-meso-2,6-diaminopimeloyl-D-alanyl-D-alanine + UDP + H(+). The protein operates within cell wall biogenesis; peptidoglycan biosynthesis. Cell wall formation. Catalyzes the transfer of a GlcNAc subunit on undecaprenyl-pyrophosphoryl-MurNAc-pentapeptide (lipid intermediate I) to form undecaprenyl-pyrophosphoryl-MurNAc-(pentapeptide)GlcNAc (lipid intermediate II). The polypeptide is UDP-N-acetylglucosamine--N-acetylmuramyl-(pentapeptide) pyrophosphoryl-undecaprenol N-acetylglucosamine transferase (Vesicomyosocius okutanii subsp. Calyptogena okutanii (strain HA)).